Here is a 186-residue protein sequence, read N- to C-terminus: Putative adenylate kinase (186 aa).

The ATP site is built by G10, G12, K13, T14, and S15. Positions 30–53 (HLNELIKEEHLYTEVDEKRDSVVA) are NMP. The LID stretch occupies residues 108–118 (KRGYSEEKVNE). R109 is a binding site for ATP.

Belongs to the adenylate kinase family. AK6 subfamily. Interacts with uS11. Not a structural component of 40S pre-ribosomes, but transiently interacts with them by binding to uS11.

It carries out the reaction AMP + ATP = 2 ADP. The enzyme catalyses ATP + H2O = ADP + phosphate + H(+). Functionally, broad-specificity nucleoside monophosphate (NMP) kinase that catalyzes the reversible transfer of the terminal phosphate group between nucleoside triphosphates and monophosphates. Also has ATPase activity. Involved in the late maturation steps of the 30S ribosomal particles, specifically 16S rRNA maturation. While NMP activity is not required for ribosome maturation, ATPase activity is. Associates transiently with small ribosomal subunit protein uS11. ATP hydrolysis breaks the interaction with uS11. May temporarily remove uS11 from the ribosome to enable a conformational change of the ribosomal RNA that is needed for the final maturation step of the small ribosomal subunit. In Methanosarcina acetivorans (strain ATCC 35395 / DSM 2834 / JCM 12185 / C2A), this protein is Putative adenylate kinase.